The primary structure comprises 385 residues: tRNA-specific 2-thiouridylase MnmA (385 aa).

Residues 8–15 and L34 each bind ATP; that span reads AMSGGVDS. The Nucleophile role is filled by C102. C102 and C200 are disulfide-bonded. G126 provides a ligand contact to ATP. The segment at 150 to 152 is interaction with tRNA; that stretch reads KDQ. C200 (cysteine persulfide intermediate) is an active-site residue. The interaction with tRNA stretch occupies residues 307 to 308; that stretch reads RY.

It belongs to the MnmA/TRMU family.

It localises to the cytoplasm. It carries out the reaction S-sulfanyl-L-cysteinyl-[protein] + uridine(34) in tRNA + AH2 + ATP = 2-thiouridine(34) in tRNA + L-cysteinyl-[protein] + A + AMP + diphosphate + H(+). Catalyzes the 2-thiolation of uridine at the wobble position (U34) of tRNA, leading to the formation of s(2)U34. The protein is tRNA-specific 2-thiouridylase MnmA of Heliobacterium modesticaldum (strain ATCC 51547 / Ice1).